A 570-amino-acid polypeptide reads, in one-letter code: Ribosome-inactivating protein SNAI (570 aa).

An N-terminal signal peptide occupies residues 1 to 28; sequence MRLVAKLLYLAVLAICGLGIHGALTHPR. N-linked (GlcNAc...) asparagine glycans are attached at residues Asn40, Asn62, and Asn144. Residue Glu199 is part of the active site. N-linked (GlcNAc...) asparagine glycosylation is present at Asn260. 3 disulfides stabilise this stretch: Cys284–Cys316, Cys332–Cys351, and Cys373–Cys385. 2 consecutive Ricin B-type lectin domains span residues 319 to 439 and 441 to 566; these read VEVT…WTVG and VEPL…WITT. Residues 329-369 form a 1-alpha repeat; it reads DGLCVDVRYGHYIDGNPVQLRPCGNECNQLWTFRTDGTIRW. The 1-beta repeat unit spans residues 370–405; that stretch reads LGKCLTASSSVMIYDCNTVPPEATKWVVSIDGTITN. The 1-gamma repeat unit spans residues 408–440; that stretch reads SGLVLTAPQAAEGTALSLENNIHAARQGWTVGD. The 2-alpha repeat unit spans residues 452–489; that stretch reads KQMCLRENGENNFVWLEDCVLNRVQQEWALYGDGTIRV. A disulfide bond links Cys455 and Cys470. The N-linked (GlcNAc...) asparagine glycan is linked to Asn492. A 2-beta repeat occupies 493–531; the sequence is RSLCVTSEDHEPSDLIVILKCEGSGNQRWVFNTNGTISN. Residues Cys496 and Cys513 are joined by a disulfide bond. Residue Asn526 is glycosylated (N-linked (GlcNAc...) asparagine). A 2-gamma repeat occupies 534 to 567; sequence AKLLMDVAQRDVSLRKIILYRPTGNPNQQWITTT.

This sequence belongs to the ribosome-inactivating protein family. Type 2 RIP subfamily. In terms of assembly, tetramer of four pairs of disulfide bound A-B chains. Post-translationally, the precursor is processed in two chains, A and B, that are linked by a disulfide bond. A small truncated form corresponding roughly to the second ricin B-type lectin domain of the B chain, TrSNAI, can also be produced. In terms of processing, glycosylated. N-glycans of subunit A are (Man)2-3(Xyl)(GlcNAc)2(Fuc) at Asn-40, (GlcNAc)0-2(Man)3(Xyl)(GlcNAc)2(Fuc) or (Man)1-2(GlcNAc)2 at Asn-62, (Man)3(Xyl)(GlcNAc)2(Fuc)0-1 at Asn-144 and (GlcNAc)0-1(Man)3(Xyl)(GlcNAc)2(Fuc) at Asn-260. N-glycans of subunit B are (Man)3(Xyl)(GlcNAc)2(Fuc) at Asn-492 and (Man)6-9(GlcNAc)2 at Asn-526. As to expression, expressed in bark.

The enzyme catalyses Endohydrolysis of the N-glycosidic bond at one specific adenosine on the 28S rRNA.. Neu5Ac(alpha2-6)Gal/GalNAc specific agglutinin. Behaves as a type-2 ribosome-inactivating protein. Strongly inhibits mammalian but not plant ribosomes. The A chain is responsible for inhibiting protein synthesis through the catalytic inactivation of 60S ribosomal subunits by removing adenine from position 4,324 of 28S rRNA. The B chain binds to cell receptors and probably facilitates the entry into the cell of the A chain; B chains are also responsible for cell agglutination (lectin activity). Involved in plant defense against insects. In terms of biological role, binds Neu5Ac(alpha2-6)Gal/GalNAc but has no clear agglutination activity. The sequence is that of Ribosome-inactivating protein SNAI from Sambucus nigra (European elder).